The sequence spans 569 residues: Putative ABC transporter ATP-binding protein TTE1589 (569 aa).

2 ABC transporter domains span residues 8–248 and 309–542; these read IIVK…IGLM and IQAK…LSLK. Residues 43–50 and 342–349 each bind ATP; these read GPSGAGKS and GHNGSGKT.

The protein belongs to the ABC transporter superfamily.

The protein resides in the cell membrane. Its function is as follows. Probably part of an ABC transporter complex. Responsible for energy coupling to the transport system. This is Putative ABC transporter ATP-binding protein TTE1589 from Caldanaerobacter subterraneus subsp. tengcongensis (strain DSM 15242 / JCM 11007 / NBRC 100824 / MB4) (Thermoanaerobacter tengcongensis).